The chain runs to 152 residues: Small ribosomal subunit protein uS19u (152 aa).

It belongs to the universal ribosomal protein uS19 family.

The protein localises to the cytoplasm. The polypeptide is Small ribosomal subunit protein uS19u (RPS15A) (Arabidopsis thaliana (Mouse-ear cress)).